We begin with the raw amino-acid sequence, 1032 residues long: Unconventional myosin-Ih (1032 aa).

Residues 12-701 form the Myosin motor domain; the sequence is GVQDFVLLDA…TLFATEDAFE (690 aa). An ATP-binding site is contributed by 105-112; it reads GESGAGKT. The residue at position 365 (S365) is a Phosphoserine. The tract at residues 578-600 is actin-binding; the sequence is LSSLLETLISKEPSYIRCIKPND. IQ domains are found at residues 704–726 and 727–756; these read KHQL…EYVK and KRQA…AVRI. A TH1 domain is found at 855-1029; that stretch reads KDGYTESLNQ…NGQLTVVSVR (175 aa).

This sequence belongs to the TRAFAC class myosin-kinesin ATPase superfamily. Myosin family.

Myosins are actin-based motor molecules with ATPase activity. Unconventional myosins serve in intracellular movements. Their highly divergent tails are presumed to bind to membranous compartments, which would be moved relative to actin filaments. This is Unconventional myosin-Ih (MYO1H) from Homo sapiens (Human).